A 137-amino-acid polypeptide reads, in one-letter code: MEKKTIVLGVIGSDCHAVGNKILDHAFTNAGFNVVNIGVLSPQEVFIKAAIETKADAILLSSLYGQGEIDCKGLRQKCDEAGLEGILLYVGGNIVVGKQHWPDVEKRFKDMGYDRVYAPGTPPEVGIADLKKDLNIE.

Residues 3-137 (KKTIVLGVIG…ADLKKDLNIE (135 aa)) enclose the B12-binding domain. Residues 13-17 (SDCHA), His-16, 61-63 (SSL), and 93-97 (NIVVG) each bind adenosylcob(III)alamin.

It belongs to the methylaspartate mutase GlmS subunit family. Heterotetramer composed of 2 epsilon subunits (GlmE) and 2 sigma subunits (GlmS). GlmE exists as a homodimer and GlmS as a monomer. It depends on adenosylcob(III)alamin as a cofactor.

The enzyme catalyses (2S,3S)-3-methyl-L-aspartate = L-glutamate. The protein operates within amino-acid degradation; L-glutamate degradation via mesaconate pathway; acetate and pyruvate from L-glutamate: step 1/4. Competitively inhibited by (2S,4S)-4-fluoroglutamate, 2-methyleneglutarate, (2R,3RS)-3-fluoroglutamate and (S)-3-methylitaconate. Catalyzes the carbon skeleton rearrangement of L-glutamate to L-threo-3-methylaspartate ((2S,3S)-3-methylaspartate). This Clostridium cochlearium protein is Glutamate mutase sigma subunit.